The sequence spans 42 residues: Thymosin beta-10 (42 aa).

Basic and acidic residues-rich tracts occupy residues 1–25 (MADK…ETQE) and 33–42 (ETIEQEKQAK). Positions 1–42 (MADKPDLGEINSFDKAKLKKTETQEKNTLPTKETIEQEKQAK) are disordered. Ala-2 carries the post-translational modification N-acetylalanine. Residue Lys-4 is modified to N6-acetyllysine. Ser-12 carries the phosphoserine modification. Position 15 is an N6-acetyllysine (Lys-15). Phosphothreonine is present on residues Thr-21, Thr-23, and Thr-34. Lys-39 carries the post-translational modification N6-acetyllysine.

The protein belongs to the thymosin beta family. In terms of tissue distribution, distributed in numerous types of tissues, including thymus, spleen, lung, liver and muscle.

The protein resides in the cytoplasm. The protein localises to the cytoskeleton. Plays an important role in the organization of the cytoskeleton. Binds to and sequesters actin monomers (G actin) and therefore inhibits actin polymerization. This chain is Thymosin beta-10 (TMSB10), found in Bos taurus (Bovine).